Here is a 248-residue protein sequence, read N- to C-terminus: ATP synthase subunit a, chloroplastic (248 aa).

5 helical membrane passes run 35–55 (GQVF…SFLG), 94–114 (VPYI…GALI), 133–153 (INTT…AGLS), 202–222 (VFTL…GLFA), and 224–244 (SIQA…AMEG).

The protein belongs to the ATPase A chain family. As to quaternary structure, F-type ATPases have 2 components, CF(1) - the catalytic core - and CF(0) - the membrane proton channel. CF(1) has five subunits: alpha(3), beta(3), gamma(1), delta(1), epsilon(1). CF(0) has four main subunits: a, b, b' and c.

It localises to the plastid. The protein resides in the chloroplast thylakoid membrane. Key component of the proton channel; it plays a direct role in the translocation of protons across the membrane. The polypeptide is ATP synthase subunit a, chloroplastic (Pyropia yezoensis (Susabi-nori)).